A 309-amino-acid chain; its full sequence is Glutaminase (309 aa).

Positions 65, 117, 162, 169, 193, 245, and 263 each coordinate substrate.

It belongs to the glutaminase family. In terms of assembly, homotetramer.

The enzyme catalyses L-glutamine + H2O = L-glutamate + NH4(+). This Bacillus cereus (strain ATCC 10987 / NRS 248) protein is Glutaminase.